We begin with the raw amino-acid sequence, 908 residues long: Protein translocase subunit SecA (908 aa).

Residues Q87, 105-109, and D512 each bind ATP; that span reads GEGKT. The tract at residues 865 to 908 is disordered; it reads GGDDGSDEMMAHTPMIRDGDKVGRNDPCPCGSGRKYKQCHGKLS. Residues 879–888 show a composition bias toward basic and acidic residues; the sequence is MIRDGDKVGR. Residues C892, C894, C903, and H904 each coordinate Zn(2+). The span at 898 to 908 shows a compositional bias: basic residues; that stretch reads RKYKQCHGKLS.

This sequence belongs to the SecA family. As to quaternary structure, monomer and homodimer. Part of the essential Sec protein translocation apparatus which comprises SecA, SecYEG and auxiliary proteins SecDF-YajC and YidC. The cofactor is Zn(2+).

It localises to the cell inner membrane. It is found in the cytoplasm. It catalyses the reaction ATP + H2O + cellular proteinSide 1 = ADP + phosphate + cellular proteinSide 2.. Functionally, part of the Sec protein translocase complex. Interacts with the SecYEG preprotein conducting channel. Has a central role in coupling the hydrolysis of ATP to the transfer of proteins into and across the cell membrane, serving both as a receptor for the preprotein-SecB complex and as an ATP-driven molecular motor driving the stepwise translocation of polypeptide chains across the membrane. This chain is Protein translocase subunit SecA, found in Shewanella sp. (strain ANA-3).